A 1479-amino-acid polypeptide reads, in one-letter code: C-type mannose receptor 2 (1479 aa).

A signal peptide spans 1–30; sequence MGPGRPAPAPWPRHLLRCVLLLGCLHLGRP. Residues 31 to 1414 are Extracellular-facing; the sequence is GAPGDAALPE…PSALPENPAA (1384 aa). The 127-residue stretch at 41–167 folds into the Ricin B-type lectin domain; the sequence is PNVFLIFSHG…WRIYGSEEDL (127 aa). Cys54 and Cys68 are joined by a disulfide. Asn69 carries an N-linked (GlcNAc...) (complex) asparagine glycan. Cysteines 93 and 112 form a disulfide. N-linked (GlcNAc...) asparagine glycosylation is present at Asn140. The Fibronectin type-II domain occupies 182 to 230; that stretch reads SHGKPCTIPFKYDNQWFHGCTSTGREDGHLWCATTQDYGKDERWGFCPI. Cystine bridges form between Cys187-Cys213, Cys201-Cys228, Cys266-Cys359, and Cys335-Cys351. The region spanning 244 to 360 is the C-type lectin 1 domain; sequence LTDSCYQFNF…CSIALPYVCK (117 aa). N-linked (GlcNAc...) asparagine glycosylation occurs at Asn364. C-type lectin domains lie at 389-505, 528-644, 678-809, and 832-951; these read FQGH…SICK, HSPS…RYIC, KLRY…WICK, and FQEA…YICK. 2 disulfide bridges follow: Cys410–Cys504 and Cys481–Cys496. N-linked (GlcNAc...) asparagine glycosylation occurs at Asn588. 5 cysteine pairs are disulfide-bonded: Cys618–Cys635, Cys704–Cys808, Cys785–Cys800, Cys853–Cys950, and Cys927–Cys942. N-linked (GlcNAc...) asparagine glycosylation is found at Asn954 and Asn1029. 3 consecutive C-type lectin domains span residues 979–1107, 1132–1243, and 1273–1393; these read FLNK…GFIC, YLNG…GAVC, and FREH…GVVC. Cys1078 and Cys1098 are disulfide-bonded. Lys1142 participates in a covalent cross-link: Glycyl lysine isopeptide (Lys-Gly) (interchain with G-Cter in SUMO1). Cys1220 and Cys1234 form a disulfide bridge. Asn1350 carries N-linked (GlcNAc...) asparagine glycosylation. A disulfide bridge links Cys1369 with Cys1384. The chain crosses the membrane as a helical span at residues 1415-1435; sequence LVVVLMAVLLLLALLTAALIL. Residues 1436–1479 are Cytoplasmic-facing; that stretch reads YRRRQSIERGAFEGARYSRSSSSPTEATEKNILVSDMEMNEQQE. The interval 1450–1479 is disordered; that stretch reads ARYSRSSSSPTEATEKNILVSDMEMNEQQE.

In terms of assembly, interacts with C-terminal region of type I collagen/COL1A1. Interacts directly with PLAUR/UPAR and PLAU/pro-UPA to form a tri-molecular complex. Interacts with collagen V. Post-translationally, N-glycosylated. In terms of tissue distribution, ubiquitous with low expression in brain, placenta, lung, kidney, pancreas, spleen, thymus and colon. Expressed in endothelial cells, fibroblasts and macrophages. Highly expressed in fetal lung and kidney.

Its subcellular location is the membrane. In terms of biological role, may play a role as endocytotic lectin receptor displaying calcium-dependent lectin activity. Internalizes glycosylated ligands from the extracellular space for release in an endosomal compartment via clathrin-mediated endocytosis. May be involved in plasminogen activation system controlling the extracellular level of PLAUR/PLAU, and thus may regulate protease activity at the cell surface. May contribute to cellular uptake, remodeling and degradation of extracellular collagen matrices. May play a role during cancer progression as well as in other chronic tissue destructive diseases acting on collagen turnover. May participate in remodeling of extracellular matrix cooperating with the matrix metalloproteinases (MMPs). The protein is C-type mannose receptor 2 (MRC2) of Homo sapiens (Human).